The chain runs to 272 residues: Putative phosphoenolpyruvate synthase regulatory protein (272 aa).

152 to 159 is a binding site for ADP; that stretch reads GVSRCGKT.

The protein belongs to the pyruvate, phosphate/water dikinase regulatory protein family. PSRP subfamily.

The enzyme catalyses [pyruvate, water dikinase] + ADP = [pyruvate, water dikinase]-phosphate + AMP + H(+). It carries out the reaction [pyruvate, water dikinase]-phosphate + phosphate + H(+) = [pyruvate, water dikinase] + diphosphate. In terms of biological role, bifunctional serine/threonine kinase and phosphorylase involved in the regulation of the phosphoenolpyruvate synthase (PEPS) by catalyzing its phosphorylation/dephosphorylation. This Ectopseudomonas mendocina (strain ymp) (Pseudomonas mendocina) protein is Putative phosphoenolpyruvate synthase regulatory protein.